The sequence spans 351 residues: Foldase protein PrsA 1 (351 aa).

An N-terminal signal peptide occupies residues 1-22; sequence MKNSNKLIASVVTLASVMALAA. Cysteine 23 carries the N-palmitoyl cysteine lipid modification. Cysteine 23 is lipidated: S-diacylglycerol cysteine. A PpiC domain is found at 145–240; it reads TPTMAVEMIT…KKFYIVKVTK (96 aa). Composition is skewed to low complexity over residues 303–317 and 326–351; these read KTKA…SESS and ESEQ…PAAQ. A disordered region spans residues 303–351; the sequence is KTKAASESSTTSESSKAAEENPSESEQTQTSSAEEPTETEAQTQEPAAQ.

Belongs to the PrsA family.

It localises to the cell membrane. It carries out the reaction [protein]-peptidylproline (omega=180) = [protein]-peptidylproline (omega=0). Its function is as follows. Plays a major role in protein secretion by helping the post-translocational extracellular folding of several secreted proteins. In Streptococcus pyogenes serotype M6 (strain ATCC BAA-946 / MGAS10394), this protein is Foldase protein PrsA 1.